The following is a 918-amino-acid chain: Hexokinase-1 (918 aa).

M1 is subject to N-acetylmethionine. Residues 1–10 (MIAAQLLAYY) are mitochondrial-binding peptide (MBP). Hexokinase domains are found at residues 16–458 (DDQV…MVTA) and 464–906 (AEQH…LITA). ATP contacts are provided by residues R30 and 84–89 (DLGGSS). A hexokinase small subdomain 1 region spans residues 73–207 (DGSEKGDFIA…DYDANIVAVV (135 aa)). 84 to 88 (DLGGS) is a binding site for D-glucose 6-phosphate. Residues S155, 172-173 (TK), and 208-209 (ND) each bind D-glucose. The interval 208–447 (NDTVGTMMTC…SDVRFLLSES (240 aa)) is hexokinase large subdomain 1. D-glucose 6-phosphate contacts are provided by D209 and T232. D-glucose-binding positions include N235, E260, and 291 to 294 (QLFE). Position 337 is a phosphoserine (S337). 413 to 415 (DGS) contacts D-glucose 6-phosphate. 425–426 (RR) contributes to the ATP binding site. Residues T449, 532-536 (DLGGT), and S603 each bind D-glucose 6-phosphate. A hexokinase small subdomain 2 region spans residues 521-655 (DGTEHGDFLA…EFDLDVVAVV (135 aa)). Residue 532 to 537 (DLGGTN) coordinates ATP. Residues 620–621 (TK) and 656–657 (ND) contribute to the D-glucose site. The hexokinase large subdomain 2 stretch occupies residues 656–895 (NDTVGTMMTC…CTVSFLLSED (240 aa)). The D-glucose 6-phosphate site is built by D657 and T680. ATP is bound at residue T680. N683, E708, and E742 together coordinate D-glucose. ATP contacts are provided by residues 747–748 (GM), 784–788 (TKFLS), and 863–867 (TLYKL). Residues 861 to 863 (DGT) and S897 each bind D-glucose 6-phosphate.

The protein belongs to the hexokinase family. In terms of assembly, monomer. Interacts with RABL2/RABL2A; binds preferentially to GTP-bound RABL2. Interacts with VDAC1. The HK1-VDAC1 complex interacts with ATF2. Interacts (via N-terminal spermatogenic cell-specific region) with PFKM (via C-terminus). Interacts with SMAD5. In terms of tissue distribution, expressed in flagella of epididymal sperm.

The protein localises to the mitochondrion outer membrane. It is found in the cytoplasm. It localises to the cytosol. The enzyme catalyses a D-hexose + ATP = a D-hexose 6-phosphate + ADP + H(+). It carries out the reaction D-fructose + ATP = D-fructose 6-phosphate + ADP + H(+). The catalysed reaction is D-glucose + ATP = D-glucose 6-phosphate + ADP + H(+). It catalyses the reaction D-mannose + ATP = D-mannose 6-phosphate + ADP + H(+). The enzyme catalyses D-glucosamine + ATP = D-glucosamine 6-phosphate + ADP + H(+). The protein operates within carbohydrate metabolism; hexose metabolism. It participates in carbohydrate degradation; glycolysis; D-glyceraldehyde 3-phosphate and glycerone phosphate from D-glucose: step 1/4. Its activity is regulated as follows. Hexokinase is an allosteric enzyme inhibited by its product D-glucose 6-phosphate. Hexokinase activity is inhibited by N-acetyl-D-glucosamine. In terms of biological role, catalyzes the phosphorylation of various hexoses, such as D-glucose, D-glucosamine, D-fructose, D-mannose and 2-deoxy-D-glucose, to hexose 6-phosphate (D-glucose 6-phosphate, D-glucosamine 6-phosphate, D-fructose 6-phosphate, D-mannose 6-phosphate and 2-deoxy-D-glucose 6-phosphate, respectively). Mediates the initial step of glycolysis by catalyzing phosphorylation of D-glucose to D-glucose 6-phosphate. Involved in innate immunity and inflammation by acting as a pattern recognition receptor for bacterial peptidoglycan. When released in the cytosol, N-acetyl-D-glucosamine component of bacterial peptidoglycan inhibits the hexokinase activity of HK1 and causes its dissociation from mitochondrial outer membrane, thereby activating the NLRP3 inflammasome. This chain is Hexokinase-1, found in Rattus norvegicus (Rat).